The chain runs to 469 residues: MNNSEQFLSPRMGRVEQIHFVGIGGAGMCGIAEVLHNQGYRITGSDLGESGTVQRLRSLGIQVYIGHRLENIKGADVVVRSSAVDFNNPEIVAARELMIPVIPRAAMLAELMRFRHGIAIAGTHGKTTTTSLVSSLLAEGGLDPSFVIGGKLNSCGANAQLGKSAYFVVEADESDASFLFLKPMMAVVTNIDADHMDTYEGDFEKLRTTFLEFLHHLPFYGLAVVCLEDEEICRILPAIQRPTLTYGFKEEAHYRAINWTQKGMLSEFVVVRPAPHKQLTIQFQYPGRHNVLNALASIAIATELGVDDDSIVRGLQKFQGVGRRFQMLGEKQFEKGAAIIVDDYGHHPQEILSTIDAFRRVWPERRLVHVFQPHRYTRTQSLHRQFVDVLSLSDELLLMDIYAAGETAIPGVTSENLANEIRSRDKRVTIVSEQSLKATLDEFIKDGDVILMQGAGSIGQIAVNLMKNM.

122 to 128 (GTHGKTT) is a binding site for ATP.

Belongs to the MurCDEF family.

It localises to the cytoplasm. The enzyme catalyses UDP-N-acetyl-alpha-D-muramate + L-alanine + ATP = UDP-N-acetyl-alpha-D-muramoyl-L-alanine + ADP + phosphate + H(+). The protein operates within cell wall biogenesis; peptidoglycan biosynthesis. Its function is as follows. Cell wall formation. This is UDP-N-acetylmuramate--L-alanine ligase from Legionella pneumophila subsp. pneumophila (strain Philadelphia 1 / ATCC 33152 / DSM 7513).